The primary structure comprises 572 residues: mRNA cap guanine-N(7) methyltransferase (572 aa).

2 disordered regions span residues 1–75 and 110–140; these read MPED…GSRV and EKAI…FPSS. 2 stretches are compositionally biased toward basic and acidic residues: residues 24–39 and 59–69; these read ANDG…RVHD and SADENKDKKYD. The span at 123–140 shows a compositional bias: low complexity; the sequence is TTTTPSSTTSSSSSFPSS. Positions 262–571 constitute an mRNA cap 0 methyltransferase domain; that stretch reads SPIYKLRNFN…FYVAFVFEKV (310 aa). 271-272 contacts mRNA; it reads NN. Residues Lys275, Cys302, Asp324, Asp366, Gln396, and Tyr401 each contribute to the S-adenosyl-L-methionine site.

The protein belongs to the class I-like SAM-binding methyltransferase superfamily. mRNA cap 0 methyltransferase family.

The protein resides in the nucleus. It carries out the reaction a 5'-end (5'-triphosphoguanosine)-ribonucleoside in mRNA + S-adenosyl-L-methionine = a 5'-end (N(7)-methyl 5'-triphosphoguanosine)-ribonucleoside in mRNA + S-adenosyl-L-homocysteine. In terms of biological role, responsible for methylating the 5'-cap structure of mRNAs. This chain is mRNA cap guanine-N(7) methyltransferase (ABD1), found in Lodderomyces elongisporus (strain ATCC 11503 / CBS 2605 / JCM 1781 / NBRC 1676 / NRRL YB-4239) (Yeast).